A 308-amino-acid polypeptide reads, in one-letter code: Methionyl-tRNA formyltransferase (308 aa).

110–113 contributes to the (6S)-5,6,7,8-tetrahydrofolate binding site; it reads SLLP.

It belongs to the Fmt family.

It catalyses the reaction L-methionyl-tRNA(fMet) + (6R)-10-formyltetrahydrofolate = N-formyl-L-methionyl-tRNA(fMet) + (6S)-5,6,7,8-tetrahydrofolate + H(+). Functionally, attaches a formyl group to the free amino group of methionyl-tRNA(fMet). The formyl group appears to play a dual role in the initiator identity of N-formylmethionyl-tRNA by promoting its recognition by IF2 and preventing the misappropriation of this tRNA by the elongation apparatus. The sequence is that of Methionyl-tRNA formyltransferase from Neisseria gonorrhoeae (strain NCCP11945).